The sequence spans 527 residues: MTNQAAEVAKRRTFAIISHPDAGKTTITEKLLLMGKAISVAGTVKSRKSDRHATSDWMEMEKQRGISITTSVMQFPYREHMINLLDTPGHEDFSEDTYRTLTAVDSALMVLDGGKGVEPRTIALMDVCRLRDTPIVSFINKLDRDIRDPIELLDEIEAVLKIKAAPITWPIGCYRDFKGVYHLTGDYIIVYTPGHGHERTEAKIIQKLDSDEARAHLGDQYDSFVDQLELVQGACHEFNQDEFINGQLTPVFFGTALGNFGVDHVLDAVVDWAPRPLGRVAHERTVEPVEEKFTGFVFKIQANMDPKHRDRIAFMRICSGKYEKGMKMRHVRLNKDLRIGDALTFFSSEREQLEEAFAGDIIGLHNHGTIQIGDTFTEGEALGFTGIPHFAPELFRRVRLKDPLKSKQLRQGLQQLAEEGATQVFFPERSNDIILGAVGVLQFDVVASRLKEEYKVECAYEPITVWSARWISCDDKKKLEEFQNKAMENLAIDGGGHLTYLAPTRVNLSLMEERWPDIKFRATREHH.

The 269-residue stretch at 9-277 (AKRRTFAIIS…AVVDWAPRPL (269 aa)) folds into the tr-type G domain. GTP is bound by residues 18–25 (SHPDAGKT), 86–90 (DTPGH), and 140–143 (NKLD).

Belongs to the TRAFAC class translation factor GTPase superfamily. Classic translation factor GTPase family. PrfC subfamily.

It localises to the cytoplasm. In terms of biological role, increases the formation of ribosomal termination complexes and stimulates activities of RF-1 and RF-2. It binds guanine nucleotides and has strong preference for UGA stop codons. It may interact directly with the ribosome. The stimulation of RF-1 and RF-2 is significantly reduced by GTP and GDP, but not by GMP. The sequence is that of Peptide chain release factor 3 from Pseudomonas entomophila (strain L48).